Reading from the N-terminus, the 105-residue chain is Met repressor (105 aa).

This sequence belongs to the MetJ family. Homodimer.

It localises to the cytoplasm. Its function is as follows. This regulatory protein, when combined with SAM (S-adenosylmethionine) represses the expression of the methionine regulon and of enzymes involved in SAM synthesis. This Photorhabdus laumondii subsp. laumondii (strain DSM 15139 / CIP 105565 / TT01) (Photorhabdus luminescens subsp. laumondii) protein is Met repressor.